The following is a 410-amino-acid chain: 3-phosphoshikimate 1-carboxyvinyltransferase (410 aa).

The 3-phosphoshikimate site is built by Lys-21, Ser-22, and Arg-26. Lys-21 provides a ligand contact to phosphoenolpyruvate. Phosphoenolpyruvate contacts are provided by Gly-69 and Arg-97. Ser-143, Ser-144, Gln-145, Ser-171, Asp-288, and Lys-315 together coordinate 3-phosphoshikimate. Gln-145 serves as a coordination point for phosphoenolpyruvate. Catalysis depends on Asp-288, which acts as the Proton acceptor. Phosphoenolpyruvate contacts are provided by Arg-319, Arg-364, and Lys-389.

The protein belongs to the EPSP synthase family. In terms of assembly, monomer.

The protein resides in the cytoplasm. The catalysed reaction is 3-phosphoshikimate + phosphoenolpyruvate = 5-O-(1-carboxyvinyl)-3-phosphoshikimate + phosphate. Its pathway is metabolic intermediate biosynthesis; chorismate biosynthesis; chorismate from D-erythrose 4-phosphate and phosphoenolpyruvate: step 6/7. Its function is as follows. Catalyzes the transfer of the enolpyruvyl moiety of phosphoenolpyruvate (PEP) to the 5-hydroxyl of shikimate-3-phosphate (S3P) to produce enolpyruvyl shikimate-3-phosphate and inorganic phosphate. This Bacteroides fragilis (strain YCH46) protein is 3-phosphoshikimate 1-carboxyvinyltransferase.